We begin with the raw amino-acid sequence, 85 residues long: CRISPR-associated endoribonuclease Cas2 (85 aa).

D8 is a binding site for Mg(2+).

This sequence belongs to the CRISPR-associated endoribonuclease Cas2 protein family. In terms of assembly, homodimer, forms a heterotetramer with a Cas1 homodimer. The cofactor is Mg(2+).

Its function is as follows. CRISPR (clustered regularly interspaced short palindromic repeat), is an adaptive immune system that provides protection against mobile genetic elements (viruses, transposable elements and conjugative plasmids). CRISPR clusters contain sequences complementary to antecedent mobile elements and target invading nucleic acids. CRISPR clusters are transcribed and processed into CRISPR RNA (crRNA). Functions as a ssRNA-specific endoribonuclease. Involved in the integration of spacer DNA into the CRISPR cassette. The chain is CRISPR-associated endoribonuclease Cas2 from Thermococcus kodakarensis (strain ATCC BAA-918 / JCM 12380 / KOD1) (Pyrococcus kodakaraensis (strain KOD1)).